A 241-amino-acid chain; its full sequence is Uridylate kinase (241 aa).

15-18 (KLSG) is an ATP binding site. The involved in allosteric activation by GTP stretch occupies residues 23-28 (GAEGFG). G57 is a UMP binding site. Residues G58 and R62 each coordinate ATP. Residues D77 and 138–145 (TGNPFFTT) each bind UMP. ATP contacts are provided by T165, Y171, and D174.

It belongs to the UMP kinase family. As to quaternary structure, homohexamer.

It localises to the cytoplasm. It catalyses the reaction UMP + ATP = UDP + ADP. The protein operates within pyrimidine metabolism; CTP biosynthesis via de novo pathway; UDP from UMP (UMPK route): step 1/1. Allosterically activated by GTP. Inhibited by UTP. In terms of biological role, catalyzes the reversible phosphorylation of UMP to UDP. The sequence is that of Uridylate kinase from Serratia proteamaculans (strain 568).